The sequence spans 115 residues: NADH-ubiquinone oxidoreductase chain 3 (115 aa).

Transmembrane regions (helical) follow at residues 4 to 24 (LVAL…AFWL), 55 to 75 (FFLV…LLPL), and 87 to 107 (MMLT…YEWM).

It belongs to the complex I subunit 3 family. In terms of assembly, core subunit of respiratory chain NADH dehydrogenase (Complex I) which is composed of 45 different subunits. Interacts with TMEM186. Interacts with TMEM242.

The protein localises to the mitochondrion inner membrane. It carries out the reaction a ubiquinone + NADH + 5 H(+)(in) = a ubiquinol + NAD(+) + 4 H(+)(out). Core subunit of the mitochondrial membrane respiratory chain NADH dehydrogenase (Complex I) which catalyzes electron transfer from NADH through the respiratory chain, using ubiquinone as an electron acceptor. Essential for the catalytic activity of complex I. This Habromys lophurus (Crested-tailed deer mouse) protein is NADH-ubiquinone oxidoreductase chain 3.